A 221-amino-acid polypeptide reads, in one-letter code: Germin-like protein 8-2 (221 aa).

The N-terminal stretch at 1–24 (MASSSFSFLLVAALLGLASWKAIA) is a signal peptide. A disulfide bridge links cysteine 34 with cysteine 49. 2 N-linked (GlcNAc...) asparagine glycosylation sites follow: asparagine 54 and asparagine 79. In terms of domain architecture, Cupin type-1 spans 64 to 215 (AMLDKPRDTN…AFQVDKKIID (152 aa)). Histidine 112, histidine 114, glutamate 119, and histidine 160 together coordinate Mn(2+).

The protein belongs to the germin family. Oligomer (believed to be a pentamer but probably hexamer).

The protein localises to the secreted. It localises to the extracellular space. The protein resides in the apoplast. Functionally, plays a role in broad-spectrum disease resistance. Probably has no oxalate oxidase activity even if the active site is conserved. The polypeptide is Germin-like protein 8-2 (GER3) (Oryza sativa subsp. japonica (Rice)).